Consider the following 421-residue polypeptide: Histidine--tRNA ligase (421 aa).

The protein belongs to the class-II aminoacyl-tRNA synthetase family. Homodimer.

It localises to the cytoplasm. It catalyses the reaction tRNA(His) + L-histidine + ATP = L-histidyl-tRNA(His) + AMP + diphosphate + H(+). The polypeptide is Histidine--tRNA ligase (Francisella tularensis subsp. tularensis (strain SCHU S4 / Schu 4)).